The chain runs to 275 residues: Pantothenate synthetase (275 aa).

ATP is bound at residue 26–33 (MGFLHEGH). Residue histidine 33 is the Proton donor of the active site. Glutamine 57 is a (R)-pantoate binding site. Residue glutamine 57 coordinates beta-alanine. Residue 143 to 146 (GQKD) coordinates ATP. (R)-pantoate is bound at residue glutamine 149. Residues alanine 172 and 180 to 183 (RSSR) contribute to the ATP site.

The protein belongs to the pantothenate synthetase family. In terms of assembly, homodimer.

The protein resides in the cytoplasm. The catalysed reaction is (R)-pantoate + beta-alanine + ATP = (R)-pantothenate + AMP + diphosphate + H(+). Its pathway is cofactor biosynthesis; (R)-pantothenate biosynthesis; (R)-pantothenate from (R)-pantoate and beta-alanine: step 1/1. In terms of biological role, catalyzes the condensation of pantoate with beta-alanine in an ATP-dependent reaction via a pantoyl-adenylate intermediate. This Gluconobacter oxydans (strain 621H) (Gluconobacter suboxydans) protein is Pantothenate synthetase.